We begin with the raw amino-acid sequence, 1127 residues long: Ras guanine nucleotide exchange factor F (1127 aa).

Disordered regions lie at residues 1-82 (MTDK…SLLN) and 96-154 (NSGG…SSSS). Composition is skewed to low complexity over residues 23 to 53 (NQPSPSTSTPASPNVNSTNNSPSVSPATTSP) and 67 to 82 (NNNNNTNIPHQTSLLN). The span at 122–132 (RTSTTLAQFSG) shows a compositional bias: polar residues. The segment covering 133–154 (SSLPNTENSSPPPSSSLISSSS) has biased composition (low complexity). Kelch repeat units lie at residues 212 to 261 (GFYL…LYNN), 262 to 311 (SMYI…VESG), 313 to 366 (MIVF…MHKG), 367 to 418 (NMYV…LFQD), and 420 to 469 (IFIS…VKGN). The LisH domain occupies 557–589 (SHQFVLQLIMEYLERNTYHKVIAAIQKESGVLH). Residues 673–804 (NKVQIKAATF…KLRELKKKLQ (132 aa)) enclose the N-terminal Ras-GEF domain. One can recognise a Ras-GEF domain in the interval 835-1062 (DELEIARQMT…YDLNLLSESL (228 aa)). The tract at residues 1090 to 1127 (LGSARELNNSNRDSNNITGSSSNNNSNSSNSLSPIVKL) is disordered. Positions 1103-1127 (SNNITGSSSNNNSNSSNSLSPIVKL) are enriched in low complexity.

Its function is as follows. Promotes the exchange of Ras-bound GDP by GTP. This Dictyostelium discoideum (Social amoeba) protein is Ras guanine nucleotide exchange factor F (gefF).